We begin with the raw amino-acid sequence, 1028 residues long: Collagen alpha-1(VI) chain (1028 aa).

An N-terminal signal peptide occupies residues 1–19; that stretch reads MRAARALLPLLLQACWTAA. An N-terminal globular domain region spans residues 20–256; that stretch reads QDEPETPRAV…CCSFECQPAR (237 aa). In terms of domain architecture, VWFA 1 spans 37 to 235; sequence DLFFVLDTSE…EAISQTIDTI (199 aa). Asn-212 carries an N-linked (GlcNAc...) asparagine glycan. The segment at 254 to 590 is disordered; sequence PARGPPGLRG…GPPGHQGPPG (337 aa). The tract at residues 257–592 is triple-helical region; that stretch reads GPPGLRGDPG…PGHQGPPGPD (336 aa). Positions 262–264 match the Cell attachment site motif; it reads RGD. Basic and acidic residues-rich tracts occupy residues 268–285 and 301–334; these read EGER…EAGD and KGEK…DGVK. Over residues 384 to 394 the composition is skewed to low complexity; it reads RPGSSGPSGDE. The Cell attachment site signature appears at 442–444; the sequence is RGD. Positions 457–471 are enriched in low complexity; sequence EGPVGVPGDPGEAGP. The Cell attachment site signature appears at 478–480; it reads RGD. A compositionally biased stretch (low complexity) spans 483–493; it reads PPGSEGARGAP. N-linked (GlcNAc...) asparagine glycosylation is found at Asn-516 and Asn-537. The segment covering 550–560 has biased composition (acidic residues); the sequence is GEAGDPGDDNN. A compositionally biased stretch (pro residues) spans 579–590; the sequence is PQGPPGHQGPPG. The tract at residues 593 to 1028 is C-terminal globular domain; it reads ECEILDIIMK…QTVSRKVALG (436 aa). VWFA domains lie at 615–805 and 829–1021; these read DLLF…LKNV and DITI…HQTV. Residues Asn-804 and Asn-896 are each glycosylated (N-linked (GlcNAc...) asparagine).

The protein belongs to the type VI collagen family. Trimers composed of three different chains: alpha-1(VI), alpha-2(VI), and alpha-3(VI) or alpha-5(VI) or alpha-6(VI). Prolines at the third position of the tripeptide repeating unit (G-X-Y) are hydroxylated in some or all of the chains.

The protein resides in the secreted. It localises to the extracellular space. The protein localises to the extracellular matrix. Functionally, collagen VI acts as a cell-binding protein. The sequence is that of Collagen alpha-1(VI) chain (COL6A1) from Homo sapiens (Human).